Reading from the N-terminus, the 413-residue chain is High zinc activated nuclear receptor protein (413 aa).

Positions L11 to L86 form a DNA-binding region, nuclear receptor. 2 NR C4-type zinc fingers span residues C14–C34 and C50–C69. The segment at S101 to N412 is required for zinc-binding. The region spanning Q135–A396 is the NR LBD domain.

The protein belongs to the nuclear hormone receptor family. Weakly expressed in intestinal cells in the absence of zinc supplementation. Upon zinc supplementation, accumulates in alimentary tract cells, and it is mainly expressed in the intestine.

The protein resides in the nucleus. It is found in the cytoplasm. In terms of biological role, nuclear receptor transcription factor that binds to DNA enhancer elements to promote the transcription of genes required to maintain micronutrient homeostasis. Direct binding to its ligand zinc allows for nuclear accumulation and activation, which thereby induces the transcription of genes required to promote the storage and detoxification of excess dietary zinc. This in turn, allows for internal zinc levels to be detected and regulated. The protein is High zinc activated nuclear receptor protein of Caenorhabditis elegans.